The primary structure comprises 532 residues: Probable cyclic di-GMP phosphodiesterase PdeD (532 aa).

2 helical membrane passes run 16-36 (MIVC…VRFI) and 245-265 (LPLA…ATAY). In terms of domain architecture, EAL spans 266–515 (RMSFSREINL…DFPKWLAGSQ (250 aa)).

The protein localises to the cell membrane. It carries out the reaction 3',3'-c-di-GMP + H2O = 5'-phosphoguanylyl(3'-&gt;5')guanosine + H(+). Phosphodiesterase (PDE) that catalyzes the hydrolysis of cyclic-di-GMP (c-di-GMP) to 5'-pGpG. May serve as a negative regulator of cellulose synthesis (as has been suggested for S.typhimurium); overexpression inhibits cell aggregation in strains able to produce adhesive curli fimbriae. Cyclic-di-GMP is a second messenger which controls cell surface-associated traits in bacteria. This chain is Probable cyclic di-GMP phosphodiesterase PdeD, found in Escherichia coli (strain K12).